A 218-amino-acid chain; its full sequence is MDKSESTSAGRNRRRRPRRGSRSASSSSDANFRVLSQQLSRLNKTLAAGRPTINHPTFVGSERCKPGYTFTSITLKPPKIDRGSYYGKRLLLPDSVTEYDKKLVSRIQIRVNPLPKFDSTVWVTVRKVPASSDLSVAAISAMFADGASPVLVHQYAASGVQANNKLLYDLSAMRADIGDMRKYAVLVYSKDDALETDELVLHVDVEHQRIPTSGVLPV.

M1 bears the N-acetylmethionine; by host mark. The segment covering 1–10 (MDKSESTSAG) has biased composition (low complexity). Positions 1–30 (MDKSESTSAGRNRRRRPRRGSRSASSSSDA) are disordered. Positions 11-21 (RNRRRRPRRGS) are enriched in basic residues.

Belongs to the cucumovirus capsid protein family.

Its subcellular location is the virion. Functionally, capsid protein. Probably binds RNA and plays a role in packaging. The chain is Capsid protein from Cucumis sativus (Cucumber).